The sequence spans 398 residues: MSNLVLAINAGSSSLKFQLIEIPEEKLVSKGLIERIGLKGSKITVEYDGRKFTDEKEINDHVQAVNIMLDNLIDLGIIRDINDIDGTGHRVVHGGELFPESALVTNNVEKQIESLTELAPLHNPANLMGIRAFRKLLPGIPHVAVFDTSFHQTMPEQAYLYSLPFHYYKDYGIRKYGFHGTSHKYVSQRAAEILGKPIEELRIISCHIGNGASIAAIDGGESVDTSMGFTPLAGVTMGTRSGDIDPALIPYIMEKTGKSAEAVLDILNKESGLLGISGTSSDLRDLEQDAEEGKTRAQLALDVFASRIHKYIGSYAAKMHGVDVVIFTAGVGENSDEVRARVLEGLEFMGVYWDPKKNSQLHGTEGFINYPHSPVKVIVIPTNEEVMIARDAVKFGSL.

Mg(2+) is bound at residue asparagine 9. Lysine 16 is an ATP binding site. Substrate is bound at residue arginine 90. Aspartate 147 acts as the Proton donor/acceptor in catalysis. ATP-binding positions include 207–211 (HIGNG), 282–284 (DLR), and 330–334 (GVGEN). A Mg(2+)-binding site is contributed by glutamate 384.

The protein belongs to the acetokinase family. As to quaternary structure, homodimer. It depends on Mg(2+) as a cofactor. Mn(2+) serves as cofactor.

Its subcellular location is the cytoplasm. It catalyses the reaction acetate + ATP = acetyl phosphate + ADP. It functions in the pathway metabolic intermediate biosynthesis; acetyl-CoA biosynthesis; acetyl-CoA from acetate: step 1/2. Catalyzes the formation of acetyl phosphate from acetate and ATP. Can also catalyze the reverse reaction. This is Acetate kinase from Staphylococcus carnosus (strain TM300).